Consider the following 211-residue polypeptide: uncharacterized protein (211 aa).

This is an uncharacterized protein from Dictyostelium discoideum (Social amoeba).